Consider the following 322-residue polypeptide: Replication factor C small subunit (322 aa).

46–53 (GSAGIGKT) is a binding site for ATP.

It belongs to the activator 1 small subunits family. RfcS subfamily. In terms of assembly, heteromultimer composed of small subunits (RfcS) and large subunits (RfcL).

Its function is as follows. Part of the RFC clamp loader complex which loads the PCNA sliding clamp onto DNA. The polypeptide is Replication factor C small subunit (Methanoculleus marisnigri (strain ATCC 35101 / DSM 1498 / JR1)).